A 394-amino-acid chain; its full sequence is Carbamoyl phosphate synthase small chain (394 aa).

A CPSase region spans residues 1 to 188; that stretch reads MIRKERAILA…PLPYAFPTLR (188 aa). Residues Ser-49, Gly-240, and Gly-242 each contribute to the L-glutamine site. Residues 192–379 form the Glutamine amidotransferase type-1 domain; that stretch reads RVVLMDFGIK…IEEIDAFEGA (188 aa). Catalysis depends on Cys-267, which acts as the Nucleophile. Residues Leu-268, Gln-271, Asn-309, Gly-311, and Tyr-312 each coordinate L-glutamine. Catalysis depends on residues His-352 and Glu-354.

It belongs to the CarA family. In terms of assembly, composed of two chains; the small (or glutamine) chain promotes the hydrolysis of glutamine to ammonia, which is used by the large (or ammonia) chain to synthesize carbamoyl phosphate. Tetramer of heterodimers (alpha,beta)4.

The enzyme catalyses hydrogencarbonate + L-glutamine + 2 ATP + H2O = carbamoyl phosphate + L-glutamate + 2 ADP + phosphate + 2 H(+). It carries out the reaction L-glutamine + H2O = L-glutamate + NH4(+). It functions in the pathway amino-acid biosynthesis; L-arginine biosynthesis; carbamoyl phosphate from bicarbonate: step 1/1. Its pathway is pyrimidine metabolism; UMP biosynthesis via de novo pathway; (S)-dihydroorotate from bicarbonate: step 1/3. Functionally, small subunit of the glutamine-dependent carbamoyl phosphate synthetase (CPSase). CPSase catalyzes the formation of carbamoyl phosphate from the ammonia moiety of glutamine, carbonate, and phosphate donated by ATP, constituting the first step of 2 biosynthetic pathways, one leading to arginine and/or urea and the other to pyrimidine nucleotides. The small subunit (glutamine amidotransferase) binds and cleaves glutamine to supply the large subunit with the substrate ammonia. The polypeptide is Carbamoyl phosphate synthase small chain (Deinococcus geothermalis (strain DSM 11300 / CIP 105573 / AG-3a)).